A 346-amino-acid chain; its full sequence is Phosphoribosylformylglycinamidine cyclo-ligase (346 aa).

The protein belongs to the AIR synthase family.

It localises to the cytoplasm. It catalyses the reaction 2-formamido-N(1)-(5-O-phospho-beta-D-ribosyl)acetamidine + ATP = 5-amino-1-(5-phospho-beta-D-ribosyl)imidazole + ADP + phosphate + H(+). It participates in purine metabolism; IMP biosynthesis via de novo pathway; 5-amino-1-(5-phospho-D-ribosyl)imidazole from N(2)-formyl-N(1)-(5-phospho-D-ribosyl)glycinamide: step 2/2. The chain is Phosphoribosylformylglycinamidine cyclo-ligase from Bacillus cereus (strain ZK / E33L).